The following is a 287-amino-acid chain: Ribosomal RNA small subunit methyltransferase A (287 aa).

Positions 28, 30, 55, 77, 103, and 123 each coordinate S-adenosyl-L-methionine.

This sequence belongs to the class I-like SAM-binding methyltransferase superfamily. rRNA adenine N(6)-methyltransferase family. RsmA subfamily.

The protein localises to the cytoplasm. The catalysed reaction is adenosine(1518)/adenosine(1519) in 16S rRNA + 4 S-adenosyl-L-methionine = N(6)-dimethyladenosine(1518)/N(6)-dimethyladenosine(1519) in 16S rRNA + 4 S-adenosyl-L-homocysteine + 4 H(+). Specifically dimethylates two adjacent adenosines (A1518 and A1519) in the loop of a conserved hairpin near the 3'-end of 16S rRNA in the 30S particle. May play a critical role in biogenesis of 30S subunits. The polypeptide is Ribosomal RNA small subunit methyltransferase A (Nitrobacter winogradskyi (strain ATCC 25391 / DSM 10237 / CIP 104748 / NCIMB 11846 / Nb-255)).